The chain runs to 461 residues: L-seryl-tRNA(Sec) selenium transferase (461 aa).

Position 294 is an N6-(pyridoxal phosphate)lysine (Lys294).

Belongs to the SelA family. It depends on pyridoxal 5'-phosphate as a cofactor.

It localises to the cytoplasm. It carries out the reaction L-seryl-tRNA(Sec) + selenophosphate + H(+) = L-selenocysteinyl-tRNA(Sec) + phosphate. It functions in the pathway aminoacyl-tRNA biosynthesis; selenocysteinyl-tRNA(Sec) biosynthesis; selenocysteinyl-tRNA(Sec) from L-seryl-tRNA(Sec) (bacterial route): step 1/1. Functionally, converts seryl-tRNA(Sec) to selenocysteinyl-tRNA(Sec) required for selenoprotein biosynthesis. The chain is L-seryl-tRNA(Sec) selenium transferase from Actinobacillus pleuropneumoniae serotype 7 (strain AP76).